We begin with the raw amino-acid sequence, 72 residues long: Protein RALF-like 36 (72 aa).

A signal peptide spans 1 to 27 (MGISKKTVVQSFALIIIISIVMSTTEA). 2 disulfide bridges follow: Cys43-Cys51 and Cys63-Cys69.

This sequence belongs to the plant rapid alkalinization factor (RALF) family.

The protein resides in the secreted. Its function is as follows. Cell signaling peptide that may regulate plant stress, growth, and development. Mediates a rapid alkalinization of extracellular space by mediating a transient increase in the cytoplasmic Ca(2+) concentration leading to a calcium-dependent signaling events through a cell surface receptor and a concomitant activation of some intracellular mitogen-activated protein kinases. In Arabidopsis thaliana (Mouse-ear cress), this protein is Protein RALF-like 36.